The chain runs to 559 residues: BTB/POZ domain-containing protein At5g47800 (559 aa).

Residues asparagine 28–alanine 96 enclose the BTB domain. The region spanning aspartate 199 to serine 476 is the NPH3 domain. Phosphotyrosine is present on tyrosine 417. The span at glycine 477–glutamate 489 shows a compositional bias: low complexity. Disordered stretches follow at residues glycine 477–histidine 502 and glutamate 524–arginine 559. Composition is skewed to basic and acidic residues over residues threonine 492–histidine 502 and glutamate 524–lysine 541.

The protein belongs to the NPH3 family.

The protein operates within protein modification; protein ubiquitination. Its function is as follows. May act as a substrate-specific adapter of an E3 ubiquitin-protein ligase complex (CUL3-RBX1-BTB) which mediates the ubiquitination and subsequent proteasomal degradation of target proteins. The protein is BTB/POZ domain-containing protein At5g47800 of Arabidopsis thaliana (Mouse-ear cress).